The primary structure comprises 426 residues: Tol-Pal system protein TolB (426 aa).

The signal sequence occupies residues 1 to 25; it reads MSITPSLSRRTVMSLLAAGLSPAFA.

This sequence belongs to the TolB family. In terms of assembly, the Tol-Pal system is composed of five core proteins: the inner membrane proteins TolA, TolQ and TolR, the periplasmic protein TolB and the outer membrane protein Pal. They form a network linking the inner and outer membranes and the peptidoglycan layer.

It is found in the periplasm. In terms of biological role, part of the Tol-Pal system, which plays a role in outer membrane invagination during cell division and is important for maintaining outer membrane integrity. This Polaromonas sp. (strain JS666 / ATCC BAA-500) protein is Tol-Pal system protein TolB.